The primary structure comprises 1368 residues: MQYSFTEKKRIRKSFAKRSIVHQVPFLLATQLESFSTFLQADVPTAQRKSEGLQAAFTSVFPIVSHNGFARLEFVSYALSSPAFNIKECQQRGLTYCSALRAKVRLVLLDKESPSKSVVKEVKEQEVYMGEIPLMTPTGSFVINGTERVIVSQLHRSPGVFFEHDKGKTHSSGKLLFSARIIPYRGSWLDFEFDPKDVLYFRVDRRRKMPVTILLKAIGLTPEQILANFFVFDNFTLMDEGAQMEFVPERLRGEVARFDITDREGKVIVQKDKRINAKHIRDLEAAKTKYISVPEDYLLGRVLAKNVVDGDTGEVIANANDEITEGVLEKLREAKIKEIQTLYTNDLDQGPYISSTLRVDETVDKTAARIAIYRMMRPGEPPTEEAVEALFNRLFYSEDAYDLSKVGRMKFNRRVGRDEITGPMTLQDDDILATIKILVELRNGKGEVDDIDHLGNRRVRCVGELAENQFRAGLVRVERAVKERLGQAESENLMPHDLINSKPISSAIREFFGSSQLSQFMDQTNPLSEITHKRRVSALGPGGLTRERAGFEVRDVHPTHYGRVCPIETPEGPNIGLINSLALYAHLNEYGFLETPYRKVVDSKVTDQIDYLSAIEEGRYMIAQANAAIGDDGALVDELVSSREAGETMMVTPDRIQYMDVAPSQIVSVAASLIPFLEHDDANRALMGSNMQRQAVPCLRPEKPVVGTGIERTVAVDSGTTVQALRGGVVDYVDAGRIVIRVNDDEAVAGEVGVDIYNLIKYTRSNQNTNINQRPIVKMGDKVSRGDVLADGASTDLGELALGQNMLIAFMPWNGYNFEDSILISERVVADDRYTSIHIEELNVVARDTKLGPEEITRDISNLAEVQLGRLDESGIVYIGAEVEAGDVLVGKVTPKGETQLTPEEKLLRAIFGEKASDVKDTSLRVPSGMSGTVIDVQVFTREGIQRDKRAQQIIDDELKRYRLDLNDQLRIVEGDAFQRLARMLVGKVANGGPKKLAKGTKIDQAYLEDLDHYHWFDIRLADDEAAVQLEAIKNSIEEKRHQFDLAFEEKRKKLTQGDELPPGVLKMVKVYLAVKRRLQPGDKMAGRHGNKGVVSKIVPVEDMPYMADGRPADVVLNPLGVPSRMNVGQVLEVHLGWAAKGLGWRIGEMLARQTKIEELRVFLTKIYNESGRAEDLESFSDDEILELAKNLREGVPFATPVFDGATEEEMSKMLDLAFPDDIAEQLDMNPSKNQVRLYDGRTGEPFERRVTVGYMHYLKLHHLVDDKMHARSTGPYSLVTQQPLGGKAQFGGQRFGEMEVWALEAYGASYVLQEMLTVKSDDVTGRTKVYENLVKGDHVIDAGMPESFNVLVKEIRSLGIDIDLDRN.

This sequence belongs to the RNA polymerase beta chain family. In terms of assembly, the RNAP catalytic core consists of 2 alpha, 1 beta, 1 beta' and 1 omega subunit. When a sigma factor is associated with the core the holoenzyme is formed, which can initiate transcription.

It catalyses the reaction RNA(n) + a ribonucleoside 5'-triphosphate = RNA(n+1) + diphosphate. Its function is as follows. DNA-dependent RNA polymerase catalyzes the transcription of DNA into RNA using the four ribonucleoside triphosphates as substrates. The sequence is that of DNA-directed RNA polymerase subunit beta from Burkholderia mallei (strain SAVP1).